Consider the following 433-residue polypeptide: Serine--tRNA ligase (433 aa).

235 to 237 contacts L-serine; it reads TSE. Residue 266–268 coordinates ATP; sequence RSE. Glu289 contributes to the L-serine binding site. 353–356 lines the ATP pocket; sequence EISS. Ser388 serves as a coordination point for L-serine.

The protein belongs to the class-II aminoacyl-tRNA synthetase family. Type-1 seryl-tRNA synthetase subfamily. As to quaternary structure, homodimer. The tRNA molecule binds across the dimer.

It is found in the cytoplasm. It catalyses the reaction tRNA(Ser) + L-serine + ATP = L-seryl-tRNA(Ser) + AMP + diphosphate + H(+). The catalysed reaction is tRNA(Sec) + L-serine + ATP = L-seryl-tRNA(Sec) + AMP + diphosphate + H(+). It functions in the pathway aminoacyl-tRNA biosynthesis; selenocysteinyl-tRNA(Sec) biosynthesis; L-seryl-tRNA(Sec) from L-serine and tRNA(Sec): step 1/1. Catalyzes the attachment of serine to tRNA(Ser). Is also able to aminoacylate tRNA(Sec) with serine, to form the misacylated tRNA L-seryl-tRNA(Sec), which will be further converted into selenocysteinyl-tRNA(Sec). This Burkholderia pseudomallei (strain 668) protein is Serine--tRNA ligase.